We begin with the raw amino-acid sequence, 260 residues long: MALRRPMVAGNWKMNGSAALAQELFKKFAVKLQNDSAEVVLCPPTIYLESVRQLLEANKEALNGCLVRMGAQNLSQHDFGAYTGEISGQMLKDSGCRYVIVGHSERRRMYGETSDIVAEKFAAAQKHGLTPILCVGESGPAREARRTFEVIAEELDVVIEKNGTMAFDNAIIAYEPLWAVGTGKSATPEQAQEVHAFIRRRLSEVSPFIGENVRILYGGSVTPSNAADLFAQPDVDGGLIGGASLNSTEFLTLCSIAMSA.

A substrate-binding site is contributed by 11 to 13 (NWK). The active-site Electrophile is the histidine 103. Residue glutamate 175 is the Proton acceptor of the active site. Substrate-binding positions include glycine 181, serine 220, and 241–242 (GG).

This sequence belongs to the triosephosphate isomerase family. Homodimer.

The protein localises to the cytoplasm. The catalysed reaction is D-glyceraldehyde 3-phosphate = dihydroxyacetone phosphate. The protein operates within carbohydrate biosynthesis; gluconeogenesis. It participates in carbohydrate degradation; glycolysis; D-glyceraldehyde 3-phosphate from glycerone phosphate: step 1/1. Its function is as follows. Involved in the gluconeogenesis. Catalyzes stereospecifically the conversion of dihydroxyacetone phosphate (DHAP) to D-glyceraldehyde-3-phosphate (G3P). This is Triosephosphate isomerase from Shewanella amazonensis (strain ATCC BAA-1098 / SB2B).